The chain runs to 125 residues: Putative iron-sulfur cluster insertion protein ErpA 2 (125 aa).

Iron-sulfur cluster-binding residues include Cys53, Cys117, and Cys119.

Belongs to the HesB/IscA family. In terms of assembly, homodimer. Requires iron-sulfur cluster as cofactor.

Its function is as follows. Required for insertion of 4Fe-4S clusters. The protein is Putative iron-sulfur cluster insertion protein ErpA 2 of Polaromonas naphthalenivorans (strain CJ2).